Consider the following 184-residue polypeptide: Two-component response regulator ARR5 (184 aa).

One can recognise a Response regulatory domain in the interval 26–154 (HVLAVDDSMV…DVKRLRDSLM (129 aa)). The residue at position 87 (aspartate 87) is a 4-aspartylphosphate.

It belongs to the ARR family. Type-A subfamily. In terms of processing, two-component system major event consists of a His-to-Asp phosphorelay between a sensor histidine kinase (HK) and a response regulator (RR). In plants, the His-to-Asp phosphorelay involves an additional intermediate named Histidine-containing phosphotransfer protein (HPt). This multistep phosphorelay consists of a His-Asp-His-Asp sequential transfer of a phosphate group between first a His and an Asp of the HK protein, followed by the transfer to a conserved His of the HPt protein and finally the transfer to an Asp in the receiver domain of the RR protein. As to expression, predominantly expressed in roots and shoot apical meristems.

The protein localises to the nucleus. Its function is as follows. Functions as a response regulator involved in His-to-Asp phosphorelay signal transduction system. Phosphorylation of the Asp residue in the receiver domain activates the ability of the protein to promote the transcription of target genes. Type-A response regulators seem to act as negative regulators of the cytokinin signaling. The protein is Two-component response regulator ARR5 (ARR5) of Arabidopsis thaliana (Mouse-ear cress).